A 23-amino-acid chain; its full sequence is Basic phospholipase A2 Smb-N6 (23 aa).

It belongs to the phospholipase A2 family. Group II subfamily. Ca(2+) serves as cofactor. Post-translationally, contains 7 disulfide bonds. As to expression, expressed by the venom gland.

The protein localises to the secreted. The catalysed reaction is a 1,2-diacyl-sn-glycero-3-phosphocholine + H2O = a 1-acyl-sn-glycero-3-phosphocholine + a fatty acid + H(+). Its function is as follows. Snake venom phospholipase A2 (PLA2) that shows myotoxic activities. PLA2 catalyzes the calcium-dependent hydrolysis of the 2-acyl groups in 3-sn-phosphoglycerides. This Sistrurus miliarius barbouri (Dusky pigmy rattlesnake) protein is Basic phospholipase A2 Smb-N6.